Reading from the N-terminus, the 350-residue chain is Quinolinate phosphoribosyltransferase [decarboxylating] 1b (350 aa).

Substrate-binding positions include arginine 141, 172 to 174 (TRK), arginine 196, lysine 206, glutamate 239, aspartate 266, 298 to 300 (SGN), and 319 to 321 (SGA).

This sequence belongs to the NadC/ModD family.

It carries out the reaction nicotinate beta-D-ribonucleotide + CO2 + diphosphate = quinolinate + 5-phospho-alpha-D-ribose 1-diphosphate + 2 H(+). It functions in the pathway alkaloid biosynthesis; nicotine biosynthesis. It participates in cofactor biosynthesis; NAD(+) biosynthesis; nicotinate D-ribonucleotide from quinolinate: step 1/1. Involved in the biosynthesis of pyridine alkaloid natural products, leading mainly to the production of anabasine, anatabine, nicotine and nornicotine, effective deterrents against herbivores with antiparasitic and pesticide properties (neurotoxins); nornicotine serves as the precursor in the synthesis of the carcinogen compound N'-nitrosonornicotine (NNN). Involved in the catabolism of quinolinic acid (QA). This Nicotiana tabacum (Common tobacco) protein is Quinolinate phosphoribosyltransferase [decarboxylating] 1b.